A 317-amino-acid polypeptide reads, in one-letter code: Ribosomal protein L11 methyltransferase (317 aa).

S-adenosyl-L-methionine is bound by residues Thr-158, Gly-179, Asp-201, and Asn-244.

Belongs to the methyltransferase superfamily. PrmA family.

Its subcellular location is the cytoplasm. It catalyses the reaction L-lysyl-[protein] + 3 S-adenosyl-L-methionine = N(6),N(6),N(6)-trimethyl-L-lysyl-[protein] + 3 S-adenosyl-L-homocysteine + 3 H(+). Methylates ribosomal protein L11. The sequence is that of Ribosomal protein L11 methyltransferase from Streptococcus pyogenes serotype M5 (strain Manfredo).